Here is a 310-residue protein sequence, read N- to C-terminus: Thiamine-monophosphate kinase (310 aa).

Mg(2+)-binding residues include aspartate 26, threonine 40, serine 41, and aspartate 42. Aspartate 49 is a binding site for substrate. Mg(2+) contacts are provided by aspartate 70 and aspartate 118. Residues 117-118 (GD) and arginine 141 contribute to the ATP site. Aspartate 202 lines the Mg(2+) pocket. ATP is bound at residue serine 204. Aspartate 205 contacts Mg(2+). The substrate site is built by glutamate 251 and tryptophan 299.

The protein belongs to the thiamine-monophosphate kinase family.

It carries out the reaction thiamine phosphate + ATP = thiamine diphosphate + ADP. It functions in the pathway cofactor biosynthesis; thiamine diphosphate biosynthesis; thiamine diphosphate from thiamine phosphate: step 1/1. Functionally, catalyzes the ATP-dependent phosphorylation of thiamine-monophosphate (TMP) to form thiamine-pyrophosphate (TPP), the active form of vitamin B1. The chain is Thiamine-monophosphate kinase from Pyrococcus abyssi (strain GE5 / Orsay).